The chain runs to 499 residues: Interferon regulatory factor 5 (499 aa).

A Nuclear localization signal motif is present at residues 12–18 (PRRVRLK). A DNA-binding region (IRF tryptophan pentad repeat) is located at residues 14–122 (RVRLKPWLVA…QPYKVYEVCS (109 aa)). Residues 121-142 (CSNGPAPAESQPSEDNAEEEEE) form a disordered region. Residues 145–155 (LQKMLPGLSIT) carry the Nuclear export signal motif. Serine 153 and serine 294 each carry phosphoserine; by TBK1. Serine 302 carries the post-translational modification Phosphoserine. Glycyl lysine isopeptide (Lys-Gly) (interchain with G-Cter in ubiquitin) cross-links involve residues lysine 412 and lysine 413. Residues serine 432, serine 436, serine 438, serine 441, and serine 447 each carry the phosphoserine modification.

It belongs to the IRF family. In terms of assembly, homodimer, when phosphorylated. Interacts with TASL (via pLxIS motif); interaction takes place downstream of TLR7, TLR8 or TLR9, leading to its activation. Interacts with MYD88 and TRAF6. In terms of processing, phosphorylation of serine and threonine residues by IKBKB in a C-terminal autoinhibitory region, stimulates dimerization, transport into the nucleus, assembly with the coactivator CBP/EP300 and initiation of transcription. 'Lys-63'-linked polyubiquitination by TRAF6 is required for activation.

The protein resides in the cytoplasm. It is found in the nucleus. Maintained as a monomer in an autoinhibited state. Phosphorylation and activation follow the following steps: innate adapter protein TASL recruits IRF5, thereby licensing IRF5 for phosphorylation by IKBKB. Phosphorylated IRF5 dissociates from the adapter proteins, dimerizes, and then enters the nucleus to induce IFNs. Transcription factor that plays a critical role in innate immunity by activating expression of type I interferon (IFN) IFNA and INFB and inflammatory cytokines downstream of endolysosomal toll-like receptors TLR7, TLR8 and TLR9. Regulates the transcription of type I IFN genes (IFN-alpha and IFN-beta) and IFN-stimulated genes (ISG) by binding to an interferon-stimulated response element (ISRE) in their promoters. Can efficiently activate both the IFN-beta (IFNB) and the IFN-alpha (IFNA) genes and mediate their induction downstream of the TLR-activated, MyD88-dependent pathway. The chain is Interferon regulatory factor 5 from Bos taurus (Bovine).